The chain runs to 297 residues: 3'-5' exonuclease eri1 (297 aa).

Positions 4 to 38 (KTPSTVEEIRIALQELGLSTNGNKEKLKRRWKFRE) constitute an SAP domain. The 86-residue stretch at 68–153 (IVDVEATCEE…EELFIFLRKH (86 aa)) folds into the Exonuclease domain. Positions 70 and 72 each coordinate Mg(2+). Glu72 functions as the Proton acceptor in the catalytic mechanism. Glu72 and Ala73 together coordinate AMP. Asp190 serves as a coordination point for Mg(2+). The Proton acceptor role is filled by His248. Position 248 (His248) interacts with AMP. Asp253 contributes to the Mg(2+) binding site.

It depends on Mg(2+) as a cofactor.

The protein localises to the cytoplasm. Functionally, RNA exonuclease that acts as a negative regulator of RNA interference (RNAi). Acts by degrading the 3'-overhangs of double-stranded short interfering RNAs (siRNAs). Represses the accumulation of heterochromatic siRNAs leading to negative regulation of the RNAi-mediated heterochromoatin assembly. Also involved in rRNA biogenesis, trimming the 5.8S ribosomal RNA (rRNA) from a slightly longer pre-5.8S RNA in the cytoplasm. This Schizosaccharomyces pombe (strain 972 / ATCC 24843) (Fission yeast) protein is 3'-5' exonuclease eri1 (eri1).